Consider the following 584-residue polypeptide: Aspartate--tRNA(Asp/Asn) ligase (584 aa).

An L-aspartate-binding site is contributed by Glu177. The aspartate stretch occupies residues 201–204; sequence QLFK. Position 223 (Arg223) interacts with L-aspartate. ATP is bound by residues 223-225 and Gln232; that span reads RDE. His447 serves as a coordination point for L-aspartate. Position 481 (Glu481) interacts with ATP. Arg488 provides a ligand contact to L-aspartate. 533–536 is an ATP binding site; sequence GLDR.

Belongs to the class-II aminoacyl-tRNA synthetase family. Type 1 subfamily. As to quaternary structure, homodimer.

The protein resides in the cytoplasm. The catalysed reaction is tRNA(Asx) + L-aspartate + ATP = L-aspartyl-tRNA(Asx) + AMP + diphosphate. Aspartyl-tRNA synthetase with relaxed tRNA specificity since it is able to aspartylate not only its cognate tRNA(Asp) but also tRNA(Asn). Reaction proceeds in two steps: L-aspartate is first activated by ATP to form Asp-AMP and then transferred to the acceptor end of tRNA(Asp/Asn). The protein is Aspartate--tRNA(Asp/Asn) ligase of Chlamydia abortus (strain DSM 27085 / S26/3) (Chlamydophila abortus).